Consider the following 1003-residue polypeptide: Anoctamin-2 (1003 aa).

The interval 1 to 68 is disordered; it reads MATPGPRDIP…PCGGESTRSS (68 aa). The Cytoplasmic segment spans residues 1–365; that stretch reads MATPGPRDIP…FGEKIGLYFA (365 aa). Over residues 10–21 the composition is skewed to low complexity; sequence PLLPGSPRRLSP. The helical transmembrane segment at 366–386 threads the bilayer; sequence WLGLYTSFLIPSSVIGVIVFL. Topologically, residues 387-434 are extracellular; sequence YGCATIEEDIPSREMCDQQNAFTMCPLCDKSCDYWNLSSACGTAQASH. The N-linked (GlcNAc...) asparagine glycan is linked to Asn-422. The helical transmembrane segment at 435-455 threads the bilayer; that stretch reads LFDNPATVFFSIFMALWATMF. Topologically, residues 456 to 538 are cytoplasmic; the sequence is LENWKRLQMR…KDRFPGYLMN (83 aa). The chain crosses the membrane as a helical span at residues 539–559; that stretch reads FASILFMIALTFSIVFGVIVY. Residues 560–582 lie on the Extracellular side of the membrane; it reads RITTAAALSLNKATRSNVRVTVT. A helical transmembrane segment spans residues 583 to 603; it reads ATAVIINLVVILILDEIYGAV. Residues 604–623 lie on the Cytoplasmic side of the membrane; the sequence is AKWLTKIEVPKTEQTFEERL. A helical transmembrane segment spans residues 624–644; the sequence is ILKAFLLKFVNAYSPIFYVAF. The Extracellular portion of the chain corresponds to 645-748; the sequence is FKGRFVGRPG…YTGLTPEYME (104 aa). A helical transmembrane segment spans residues 749 to 769; it reads MIIQFGFVTLFVASFPLAPVF. The Cytoplasmic segment spans residues 770 to 801; sequence ALLNNVIEVRLDAKKFVTELRRPDAVRTKDIG. The chain crosses the membrane as a helical span at residues 802–822; that stretch reads IWFDILSGIGKFSVISNAFVI. The Extracellular portion of the chain corresponds to 823 to 907; that stretch reads AITSDFIPRL…QYWFILSARL (85 aa). Asn-841, Asn-849, and Asn-856 each carry an N-linked (GlcNAc...) asparagine glycan. Residues 908–928 traverse the membrane as a helical segment; sequence AFVIIFQNLVMFLSVLVDWMI. Residues 929 to 1003 are Cytoplasmic-facing; sequence PDIPTDISDQ…MSSGSQHTNV (75 aa). A disordered region spans residues 961-1003; that stretch reads MDEPALRSPGGGDRSRSRAASSAPSGQSQLGSMMSSGSQHTNV. A compositionally biased stretch (low complexity) spans 978–1003; sequence RAASSAPSGQSQLGSMMSSGSQHTNV. A DLG4 binding (PDZ) motif is present at residues 1001–1003; the sequence is TNV.

It belongs to the anoctamin family. As to quaternary structure, homodimer. Component of a presynaptic protein complex recruited to specialized plasma membrane domains of photoreceptors. Interacts with DLG4 by its C-terminal region. In terms of tissue distribution, retina, especially in the photoreceptor synaptic terminals.

Its subcellular location is the cell membrane. It catalyses the reaction chloride(in) = chloride(out). Channel activity is repressed by chloride inhibitors; strongly by niflumic acid (NFA), partially by flufenamic acid (FFA), and only slightly by meclofenamic acid (MFA), 5-Nitro-2-(3-phenylpropylamino)benzoic acid (NPPB), 4-acetamido-4'-isothiocyanato-stilben-2,2'-disulfonate (SITS), and 4,4'-diisothiocyanatostilbene-2,2'-disulfonic acid (DIDS). Calcium-activated chloride channel (CaCC) which may play a role in olfactory signal transduction. Odorant molecules bind to odor-sensing receptors (OSRs), leading to an increase in calcium entry that activates CaCC current which amplifies the depolarization of the OSR cells, ANO2 seems to be the underlying chloride channel involved in this process. May mediate light perception amplification in retina. This is Anoctamin-2 (ANO2) from Homo sapiens (Human).